The sequence spans 283 residues: Polyamine aminopropyltransferase (283 aa).

Residues 5 to 241 form the PABS domain; sequence NNWYIEHFER…GWWSVTMARK (237 aa). Gln-35 is a binding site for S-methyl-5'-thioadenosine. Spermidine is bound by residues His-66 and Asp-90. S-methyl-5'-thioadenosine contacts are provided by residues Asp-110 and 141–142; that span reads DG. Catalysis depends on Asp-160, which acts as the Proton acceptor. 160-163 contacts spermidine; sequence DSTD. Pro-167 contributes to the S-methyl-5'-thioadenosine binding site.

Belongs to the spermidine/spermine synthase family. In terms of assembly, homodimer or homotetramer.

It localises to the cytoplasm. The enzyme catalyses S-adenosyl 3-(methylsulfanyl)propylamine + putrescine = S-methyl-5'-thioadenosine + spermidine + H(+). It participates in amine and polyamine biosynthesis; spermidine biosynthesis; spermidine from putrescine: step 1/1. Catalyzes the irreversible transfer of a propylamine group from the amino donor S-adenosylmethioninamine (decarboxy-AdoMet) to putrescine (1,4-diaminobutane) to yield spermidine. In Stenotrophomonas maltophilia (strain K279a), this protein is Polyamine aminopropyltransferase.